An 834-amino-acid chain; its full sequence is Nucleolar protein 9 (834 aa).

Basic residues predominate over residues 1-10 (MGKNRKSKRQ). The tract at residues 1–54 (MGKNRKSKRQLIRDEKRAKKRGHENAEEEVRDAKRQRRTDGDEEHNADFIPLDG) is disordered. Basic and acidic residues predominate over residues 38 to 47 (RTDGDEEHNA). 4 Pumilio repeats span residues 145–180 (EAKGKELKLASSQSCSRLMERLILLSNTKQKKSMFD), 181–216 (AFSGHFISLVTHRFASHCCEKLFLQSAPVVTQELAG), 250–290 (EFEE…SLLQ), and 630–666 (AMLPNIIDMALTHHGNPIVCSIITMASKGDKDVPVVP). Over residues 749–764 (EEAFPEEMEEDQPEES) the composition is skewed to acidic residues. The tract at residues 749–834 (EEAFPEEMEE…VEEDAMEIDG (86 aa)) is disordered. Residues 770-822 (KKEKKEKKEKKEKKEKKEKKEKKEKKEKKEKKEKKEKKEKKEKKEKKEKKEKK) are compositionally biased toward basic residues.

Belongs to the NOP9 family.

The protein localises to the nucleus. Its subcellular location is the nucleolus. Its function is as follows. RNA-binding nucleolar protein required for pre-rRNA processing. Involved in production of 18S rRNA and assembly of small ribosomal subunit. The sequence is that of Nucleolar protein 9 (NOP9) from Podospora anserina (strain S / ATCC MYA-4624 / DSM 980 / FGSC 10383) (Pleurage anserina).